Consider the following 147-residue polypeptide: Large ribosomal subunit protein uL15 (147 aa).

Over residues 1–12 (MTLRLNDLKPAD) the composition is skewed to basic and acidic residues. The segment at 1–61 (MTLRLNDLKP…GFEGGQTPMQ (61 aa)) is disordered. Residues 23 to 33 (RGIGSGLGKTA) are compositionally biased toward gly residues. The segment covering 34-47 (GRGHKGSFARKGGG) has biased composition (basic residues).

This sequence belongs to the universal ribosomal protein uL15 family. In terms of assembly, part of the 50S ribosomal subunit.

Functionally, binds to the 23S rRNA. The chain is Large ribosomal subunit protein uL15 from Xanthomonas oryzae pv. oryzae (strain MAFF 311018).